A 253-amino-acid chain; its full sequence is uncharacterized protein (253 aa).

A run of 6 helical transmembrane segments spans residues 17–37 (MWLLVWICGIIFLLGTGHIIA), 46–66 (IFGFFVAVAFFLLFLSPVFVF), 93–113 (LAASLLYQFVIQLALTAYGIW), 139–159 (MYGLISSLDMSVTVIVFWTVF), 172–192 (AMVLLVAMWLFFDEYIISPLV), and 222–242 (IHLSVLGFPIAIVITFLLLIM).

The protein localises to the cell membrane. This is an uncharacterized protein from Bacillus subtilis (strain 168).